Reading from the N-terminus, the 82-residue chain is Small ribosomal subunit protein uS17 (82 aa).

This sequence belongs to the universal ribosomal protein uS17 family. In terms of assembly, part of the 30S ribosomal subunit.

Its function is as follows. One of the primary rRNA binding proteins, it binds specifically to the 5'-end of 16S ribosomal RNA. In Shewanella sp. (strain W3-18-1), this protein is Small ribosomal subunit protein uS17.